A 379-amino-acid chain; its full sequence is Cytochrome b (379 aa).

4 helical membrane-spanning segments follow: residues 33–53, 77–98, 113–133, and 178–198; these read FGSLLGLCLISQILTGLFLAM, WLIRNLHANGASFFFICLYLHI, WNIGVVLFLLVMMTAFVGYVL, and FFAFHFLFPFVVAGATMIHLL. Positions 83 and 97 each coordinate heme b. Residues histidine 182 and histidine 196 each contribute to the heme b site. Position 201 (histidine 201) interacts with a ubiquinone. Transmembrane regions (helical) follow at residues 226–246, 288–308, 320–340, and 347–367; these read YKDLLGFIIMLTALTMLALFY, LGGVLALLSSILVLMVVPILH, ASQLLFWILVADMLVLTWIGG, and YIIIGQVASVLYFSLFLVLNP.

It belongs to the cytochrome b family. The cytochrome bc1 complex contains 3 respiratory subunits (MT-CYB, CYC1 and UQCRFS1), 2 core proteins (UQCRC1 and UQCRC2) and probably 6 low-molecular weight proteins. The cofactor is heme b.

The protein localises to the mitochondrion inner membrane. Component of the ubiquinol-cytochrome c reductase complex (complex III or cytochrome b-c1 complex) that is part of the mitochondrial respiratory chain. The b-c1 complex mediates electron transfer from ubiquinol to cytochrome c. Contributes to the generation of a proton gradient across the mitochondrial membrane that is then used for ATP synthesis. In Anguilla reinhardtii (Speckled longfin eel), this protein is Cytochrome b (mt-cyb).